The primary structure comprises 52 residues: Large ribosomal subunit protein bL32c (52 aa).

The protein belongs to the bacterial ribosomal protein bL32 family.

The protein localises to the plastid. Its subcellular location is the chloroplast. This Eucalyptus globulus subsp. globulus (Tasmanian blue gum) protein is Large ribosomal subunit protein bL32c.